A 361-amino-acid chain; its full sequence is Chorismate synthase (361 aa).

Positions 48 and 54 each coordinate NADP(+). FMN is bound by residues 125 to 127 (RSS), 238 to 239 (NA), G278, 293 to 297 (KPTSS), and R319.

It belongs to the chorismate synthase family. In terms of assembly, homotetramer. The cofactor is FMNH2.

The enzyme catalyses 5-O-(1-carboxyvinyl)-3-phosphoshikimate = chorismate + phosphate. It functions in the pathway metabolic intermediate biosynthesis; chorismate biosynthesis; chorismate from D-erythrose 4-phosphate and phosphoenolpyruvate: step 7/7. In terms of biological role, catalyzes the anti-1,4-elimination of the C-3 phosphate and the C-6 proR hydrogen from 5-enolpyruvylshikimate-3-phosphate (EPSP) to yield chorismate, which is the branch point compound that serves as the starting substrate for the three terminal pathways of aromatic amino acid biosynthesis. This reaction introduces a second double bond into the aromatic ring system. The protein is Chorismate synthase of Escherichia coli O1:K1 / APEC.